The chain runs to 131 residues: Small ribosomal subunit protein uS8 (131 aa).

This sequence belongs to the universal ribosomal protein uS8 family. Part of the 30S ribosomal subunit. Contacts proteins S5 and S12.

Its function is as follows. One of the primary rRNA binding proteins, it binds directly to 16S rRNA central domain where it helps coordinate assembly of the platform of the 30S subunit. The chain is Small ribosomal subunit protein uS8 from Burkholderia mallei (strain NCTC 10247).